Consider the following 227-residue polypeptide: MDTMIHRTRIKICGLTRAEDMQDALAAGADAIGFVFYARSPRYIAPDAAAQLIAQLPPFVSAVGLFVNAGVEEVQAVVAQTSIALLQFHGDETVTECAAIAAAVNRPFIRAIRVKPDTSAADLLKYESDYRAASRLFAGLLLDTYVDSYGGSGKVFDWSLIPANIAPRVVLSGGLSAQNATDAVQRIRPYAVDVSSGVERDKGIKDVAKINAFIAAVRVADAALQSK.

It belongs to the TrpF family.

It carries out the reaction N-(5-phospho-beta-D-ribosyl)anthranilate = 1-(2-carboxyphenylamino)-1-deoxy-D-ribulose 5-phosphate. It participates in amino-acid biosynthesis; L-tryptophan biosynthesis; L-tryptophan from chorismate: step 3/5. This is N-(5'-phosphoribosyl)anthranilate isomerase from Herminiimonas arsenicoxydans.